Consider the following 271-residue polypeptide: MFSIQQPLLVFSDLDGTLLDSHSYDWQPAAPWLSRLREANVPVILCSSKTSAEMLYLQKTLGLQGLPLIAENGAVIQLAEQWQDIDGFPRIISGISHGEISQVLNTLREKEHFKFTTFDDVDDATIAEWTGLSRSQAALTQLHEASVTLIWRDSDERMAQFTARLNELGLQFMQGARFWHVLDASAGKDQAANWIIATYQQLSGKRPTTLGLGDGPNDAPLLEVMDYAVIVKGLNREGVHLHDEDPARVWRTQREGPEGWREGLDHFFSAR.

Aspartate 13 serves as the catalytic Nucleophile. Positions 13, 15, and 214 each coordinate Mg(2+).

Belongs to the HAD-like hydrolase superfamily. MPGP family. Requires Mg(2+) as cofactor.

Its subcellular location is the cytoplasm. It catalyses the reaction 2-O-(alpha-D-mannosyl)-3-phosphoglycerate + H2O = (2R)-2-O-(alpha-D-mannosyl)-glycerate + phosphate. This chain is Mannosyl-3-phosphoglycerate phosphatase, found in Escherichia coli (strain SE11).